The primary structure comprises 138 residues: DASH complex subunit DAD2 (138 aa).

A compositionally biased stretch (polar residues) spans 1 to 14 (MSGFSSRPLSTHLR). 2 disordered regions span residues 1–25 (MSGFSSRPLSTHLRQPSLAPPQGQS) and 116–138 (PTEHAPALQAHAEGATEEESGRG).

Belongs to the DASH complex DAD2 family. As to quaternary structure, component of the DASH complex consisting of ASK1, DAD1, DAD2, DAD3, DAD4, DAM1, DUO1, HSK3, SPC19 and SPC34, with a stoichiometry of one copy of each subunit per complex. Multiple DASH complexes oligomerize to form a ring that encircles spindle microtubules and organizes the rod-like NDC80 complexes of the outer kinetochore. DASH complex oligomerization strengthens microtubule attachments. On cytoplasmic microtubules, DASH complexes appear to form patches instead of rings.

It is found in the chromosome. It localises to the centromere. The protein resides in the kinetochore. The protein localises to the cytoplasm. Its subcellular location is the cytoskeleton. It is found in the spindle. It localises to the nucleus. Component of the DASH complex that connects microtubules with kinetochores and couples microtubule depolymerisation to chromosome movement; it is involved in retrieving kinetochores to the spindle poles before their re-orientation on the spindle in early mitosis and allows microtubule depolymerization to pull chromosomes apart and resist detachment during anaphase. Kinetochores, consisting of a centromere-associated inner segment and a microtubule-contacting outer segment, play a crucial role in chromosome segregation by mediating the physical connection between centromeric DNA and microtubules. Kinetochores also serve as an input point for the spindle assembly checkpoint, which delays anaphase until all chromosomes have bioriented on the mitotic spindle. This is DASH complex subunit DAD2 from Chaetomium thermophilum (strain DSM 1495 / CBS 144.50 / IMI 039719) (Thermochaetoides thermophila).